The following is a 712-amino-acid chain: MSPLQPLVLALLVLACCSAVPRRRQPTVVVFPGEPRTNLTNRQLAEEYLYRYGYTPGAELSEDGQSLQRALLRFQRRLSLPETGELDSTTLNAMRAPRCGVPDVGRFQTFEGELKWHHHNITYWIQNYSEDLPRAVIDDAFARAFALWSAVTPLTFTRVYGPEADIVIQFGVREHGDGYPFDGKNGLLAHAFPPGKGIQGDAHFDDEELWSLGKGVVIPTYFGNAKGAACHFPFTFEGRSYSACTTDGRSDDMLWCSTTADYDADRQFGFCPSERLYTQDGNADGKPCVFPFTFQGRTYSACTSDGRSDGYRWCATTANYDQDKLYGFCPTRVDATVTGGNAAGELCVFPFTFLGKEYSACTREGRNDGHLWCATTSNFDKDKKWGFCPDQGYSLFLVAAHEFGHALGLDHTSVPEALMYPMYRFTEEHPLHRDDVQGIQHLYGPRPEPEPRPPTTTTTTTTEPQPTAPPTVCVTGPPTARPSEGPTTGPTGPPAAGPTGPPTAGPSAAPTESPDPAEDVCNVDIFDAIAEIRNRLHFFKAGKYWRLSEGGGRRVQGPFLVKSKWPALPRKLDSAFEDPLTKKIFFFSGRQVWVYTGASLLGPRRLDKLGLGPEVAQVTGALPRPEGKVLLFSGQSFWRFDVKTQKVDPQSVTPVDQMFPGVPISTHDIFQYQEKAYFCQDHFYWRVSSQNEVNQVDYVGYVTFDLLKCPED.

The N-terminal stretch at 1-19 (MSPLQPLVLALLVLACCSA) is a signal peptide. A propeptide spans 20–106 (VPRRRQPTVV…PRCGVPDVGR (87 aa)) (activation peptide). An N-linked (GlcNAc...) asparagine glycan is attached at Asn-38. The short motif at 97–104 (PRCGVPDV) is the Cysteine switch element. Cys-99 is a binding site for Zn(2+). Asn-120 and Asn-127 each carry an N-linked (GlcNAc...) asparagine glycan. Ca(2+) contacts are provided by Asp-131 and Asp-165. Residues His-175 and Asp-177 each contribute to the Zn(2+) site. 4 residues coordinate Ca(2+): Asp-182, Gly-183, Asn-185, and Leu-187. His-190 is a Zn(2+) binding site. Residues Gly-197, Gln-199, and Asp-201 each coordinate Ca(2+). His-203 is a Zn(2+) binding site. Positions 205, 206, and 208 each coordinate Ca(2+). Fibronectin type-II domains follow at residues 225-273 (AKGA…FCPS), 283-331 (ADGK…FCPT), and 342-390 (AAGE…FCPD). Disulfide bonds link Cys-230/Cys-256, Cys-244/Cys-271, Cys-288/Cys-314, Cys-302/Cys-329, Cys-347/Cys-373, and Cys-361/Cys-388. His-401 contributes to the Zn(2+) binding site. Glu-402 is a catalytic residue. 2 residues coordinate Zn(2+): His-405 and His-411. The tract at residues 440–519 (QHLYGPRPEP…PTESPDPAED (80 aa)) is disordered. Positions 455-465 (TTTTTTTTEPQ) are enriched in low complexity. Residues 491-504 (TGPPAAGPTGPPTA) are compositionally biased toward pro residues. The segment covering 505–514 (GPSAAPTESP) has biased composition (low complexity). Cys-521 and Cys-709 form a disulfide bridge. Hemopexin repeat units follow at residues 523–568 (VDIF…WPAL), 569–613 (PRKL…GLGP), 615–662 (VAQV…FPGV), and 663–709 (PIST…LLKC).

This sequence belongs to the peptidase M10A family. In terms of assembly, exists as monomer or homodimer; disulfide-linked. Also exists as heterodimer with LCN2. Macrophages and transformed cell lines produce only the monomeric form. Interacts with ECM1. Zn(2+) is required as a cofactor. Requires Ca(2+) as cofactor. In terms of processing, N- and O-glycosylated.

The protein resides in the secreted. It is found in the extracellular space. Its subcellular location is the extracellular matrix. The catalysed reaction is Cleavage of gelatin types I and V and collagen types IV and V.. Matrix metalloproteinase that plays an essential role in local proteolysis of the extracellular matrix and in leukocyte migration. Could play a role in bone osteoclastic resorption. Cleaves KiSS1 at a Gly-|-Leu bond. Cleaves NINJ1 to generate the Secreted ninjurin-1 form. Cleaves type IV and type V collagen into large C-terminal three quarter fragments and shorter N-terminal one quarter fragments. Degrades fibronectin but not laminin or Pz-peptide. The protein is Matrix metalloproteinase-9 of Bos taurus (Bovine).